The sequence spans 377 residues: Odorant receptor 30a (377 aa).

The Cytoplasmic portion of the chain corresponds to 1–34 (MELKSMDPVEMPIFGSTLKLMKFWSYLFVHNWRR). Residues 35–55 (YVAMTPYIIINCTQYVDIYLS) traverse the membrane as a helical segment. Residues 56-65 (TESLDFIIRN) are Extracellular-facing. The helical transmembrane segment at 66–86 (VYLAVLFTNTVVRGVLLCVQR) threads the bilayer. Over 87-127 (FSYERFINILKSFYIELLQSDDPIINILVKETTRLSVLISR) the chain is Cytoplasmic. A helical membrane pass occupies residues 128–148 (INLLMGCCTCIGFVTYPIFGS). At 149–172 (ERVLPYGMYLPTIDEYKYASPYYE) the chain is on the extracellular side. The chain crosses the membrane as a helical span at residues 173–193 (IFFVIQAIMAPMGCCMYIPYT). Residues 194–254 (NMVVTFTLFA…SMNALNTHLH (61 aa)) lie on the Cytoplasmic side of the membrane. Residues 255-275 (LVEFLCFGAMLCVLLFSLIIA) traverse the membrane as a helical segment. The Extracellular segment spans residues 276–280 (QTIAQ). The chain crosses the membrane as a helical span at residues 281–301 (TVIVIAYMVMIFANSVVLYYV). Residues 302–344 (ANELYFQSFDIAIAAYESNWMDFDVDTQKTLKFLIMRSQKPLA) are Cytoplasmic-facing. Residues 345–365 (ILVGGTYPMNLKMLQSLLNAI) traverse the membrane as a helical segment. Residues 366–377 (YSFFTLLRRVYG) lie on the Extracellular side of the membrane.

It belongs to the insect chemoreceptor superfamily. Heteromeric odorant receptor channel (TC 1.A.69) family. Or30a subfamily. In terms of assembly, interacts with Orco. Complexes exist early in the endomembrane system in olfactory sensory neurons (OSNs), coupling these complexes to the conserved ciliary trafficking pathway.

The protein localises to the cell membrane. Its function is as follows. Odorant receptor which mediates acceptance or avoidance behavior, depending on its substrates. The odorant receptor repertoire encodes a large collection of odor stimuli that vary widely in identity, intensity, and duration. May form a complex with Orco to form odorant-sensing units, providing sensitive and prolonged odorant signaling and calcium permeability. Involved in the behavioral responses to propyl acetate and anisole. This Drosophila melanogaster (Fruit fly) protein is Odorant receptor 30a (Or30a).